We begin with the raw amino-acid sequence, 178 residues long: Large ribosomal subunit protein uL6 (178 aa).

This sequence belongs to the universal ribosomal protein uL6 family. Part of the 50S ribosomal subunit.

In terms of biological role, this protein binds to the 23S rRNA, and is important in its secondary structure. It is located near the subunit interface in the base of the L7/L12 stalk, and near the tRNA binding site of the peptidyltransferase center. In Staphylococcus epidermidis (strain ATCC 35984 / DSM 28319 / BCRC 17069 / CCUG 31568 / BM 3577 / RP62A), this protein is Large ribosomal subunit protein uL6.